The chain runs to 950 residues: Protocadherin alpha-3 (950 aa).

The first 29 residues, 1-29 (MLFSWREDPGAQCLLLSLLLLAASEVGSG), serve as a signal peptide directing secretion. Cadherin domains are found at residues 30 to 133 (QLHY…APVF), 134 to 242 (PMSV…APAF), 243 to 350 (ERTI…VPEL), 351 to 455 (VIHS…APAF), 456 to 565 (SQSE…APAL), and 581 to 678 (VPRS…APKA). Over 30–697 (QLHYSVSEEA…GPEAALVDVN (668 aa)) the chain is Extracellular. N257 and N265 each carry an N-linked (GlcNAc...) asparagine glycan. An N-linked (GlcNAc...) asparagine glycan is attached at N548. A helical transmembrane segment spans residues 698–718 (VYLIVAICAVSSLLVLTLLLY). Topologically, residues 719 to 950 (TALRCSAPPT…GNSTTDNSDQ (232 aa)) are cytoplasmic. 2 PXXP repeats span residues 734-737 (PGKP) and 774-777 (PSLP). Positions 734 to 894 (PGKPTLVCSS…PDKFIIPGSP (161 aa)) are 6 X 4 AA repeats of P-X-X-P. Disordered stretches follow at residues 777-806 (PPCP…NPDW), 831-856 (GPGG…EVSP), and 869-889 (FKYG…DKFI). Residues 782-797 (SRDREEKQDVDVDLSA) are compositionally biased toward basic and acidic residues. 4 PXXP repeats span residues 799 to 802 (PRQP), 832 to 835 (PGGP), 873 to 876 (PGNP), and 891 to 894 (PGSP). Positions 901 to 950 (QEPANSQIDKSDFITFGKKEETKKKKKKKKGNKTQEKKEKGNSTTDNSDQ) are disordered. Basic and acidic residues predominate over residues 909-923 (DKSDFITFGKKEETK).

It localises to the cell membrane. Potential calcium-dependent cell-adhesion protein. May be involved in the establishment and maintenance of specific neuronal connections in the brain. The chain is Protocadherin alpha-3 (PCDHA3) from Pan troglodytes (Chimpanzee).